A 187-amino-acid polypeptide reads, in one-letter code: uncharacterized protein (187 aa).

Residues 26 to 157 form the Nudix hydrolase domain; it reads NRHAAVLLPI…YLDVSRRGQQ (132 aa). Residues 64–86 carry the Nudix box motif; the sequence is GVADPKDKSIIATALREAEEEVN. The Mg(2+) site is built by Glu80 and Glu84.

It belongs to the Nudix hydrolase family. PCD1 subfamily. Requires Mn(2+) as cofactor. It depends on Mg(2+) as a cofactor.

In terms of biological role, probably mediates the hydrolysis of some nucleoside diphosphate derivatives. This is an uncharacterized protein from Photorhabdus laumondii subsp. laumondii (strain DSM 15139 / CIP 105565 / TT01) (Photorhabdus luminescens subsp. laumondii).